We begin with the raw amino-acid sequence, 352 residues long: Invasion chromosome antigen T (352 aa).

It belongs to the IcaT/YfdF family.

The protein localises to the secreted. May contribute to pathogenesis, although some of its characteristics suggest it is a fossil gene. The sequence is that of Invasion chromosome antigen T from Shigella flexneri serotype 5a (strain M90T).